The sequence spans 463 residues: Digalactosyldiacylglycerol synthase 2, chloroplastic (463 aa).

Residues 1-22 (MGKKQHIAIFTTASLPWLTGTA) form the signal peptide.

Belongs to the glycosyltransferase group 1 family. Glycosyltransferase 4 subfamily. High expression in nodules infected cells, and low in nodule and root vascular tissue.

It is found in the plastid. The protein localises to the chloroplast outer membrane. It localises to the plastid outer membrane. The enzyme catalyses a 1,2-diacyl-3-O-(beta-D-galactosyl)-sn-glycerol + UDP-alpha-D-galactose = a 1,2-diacyl-3-O-[alpha-D-galactosyl-(1-&gt;6)-beta-D-galactosyl]-sn-glycerol + UDP + H(+). Functionally, involved in the synthesis of diacylglycerol galactolipids that are specifically found in thylakoid and in nodule peribacteroid membranes. Specific for alpha-glycosidic linkages. This is Digalactosyldiacylglycerol synthase 2, chloroplastic from Lotus japonicus (Lotus corniculatus var. japonicus).